Here is a 247-residue protein sequence, read N- to C-terminus: Golgi-associated RAB2 interactor protein 5A (247 aa).

Residues 1-16 (MGPPLWPDLQEPPPPG) are compositionally biased toward pro residues. Disordered regions lie at residues 1–22 (MGPPLWPDLQEPPPPGTSSQIR) and 60–92 (GDIAMRRDRGPKPALGGAGEVEPGGMAASPTGR).

The protein belongs to the GARIN family. Interacts (via N-terminus) with RAB2B (in GTP-bound form).

The protein resides in the golgi apparatus. Functionally, RAB2B effector protein which promotes cytosolic DNA-induced innate immune responses. Regulates IFN responses against DNA viruses by regulating the CGAS-STING signaling axis. This Homo sapiens (Human) protein is Golgi-associated RAB2 interactor protein 5A.